A 177-amino-acid chain; its full sequence is Large ribosomal subunit protein uL6 (177 aa).

The protein belongs to the universal ribosomal protein uL6 family. Part of the 50S ribosomal subunit.

Functionally, this protein binds to the 23S rRNA, and is important in its secondary structure. It is located near the subunit interface in the base of the L7/L12 stalk, and near the tRNA binding site of the peptidyltransferase center. The sequence is that of Large ribosomal subunit protein uL6 from Rickettsia canadensis (strain McKiel).